The sequence spans 193 residues: Peptidyl-tRNA hydrolase (193 aa).

Tyr16 is a tRNA binding site. His21 functions as the Proton acceptor in the catalytic mechanism. TRNA is bound by residues Phe67, Asn69, and Asn115.

Belongs to the PTH family. In terms of assembly, monomer.

Its subcellular location is the cytoplasm. It catalyses the reaction an N-acyl-L-alpha-aminoacyl-tRNA + H2O = an N-acyl-L-amino acid + a tRNA + H(+). In terms of biological role, hydrolyzes ribosome-free peptidyl-tRNAs (with 1 or more amino acids incorporated), which drop off the ribosome during protein synthesis, or as a result of ribosome stalling. Its function is as follows. Catalyzes the release of premature peptidyl moieties from peptidyl-tRNA molecules trapped in stalled 50S ribosomal subunits, and thus maintains levels of free tRNAs and 50S ribosomes. The chain is Peptidyl-tRNA hydrolase from Baumannia cicadellinicola subsp. Homalodisca coagulata.